A 213-amino-acid chain; its full sequence is ATP synthase peripheral stalk subunit OSCP, mitochondrial (213 aa).

The N-terminal 23 residues, 1–23 (MAAPAVSGVSQQVRYFGTSVVRP), are a transit peptide targeting the mitochondrion. Residues 5 to 23 (AVSGVSQQVRYFGTSVVRP) carry the SIFI-degron motif. N6-acetyllysine occurs at positions 54, 60, 70, and 73. An N6-succinyllysine modification is found at K90. N6-acetyllysine; alternate is present on residues K158 and K162. N6-succinyllysine; alternate occurs at positions 158 and 162. Residues K172, K176, and K192 each carry the N6-acetyllysine modification. N6-succinyllysine is present on K199.

Belongs to the ATPase delta chain family. As to quaternary structure, component of the ATP synthase complex composed at least of ATP5F1A/subunit alpha, ATP5F1B/subunit beta, ATP5MC1/subunit c (homooctomer), MT-ATP6/subunit a, MT-ATP8/subunit 8, ATP5ME/subunit e, ATP5MF/subunit f, ATP5MG/subunit g, ATP5MK/subunit k, ATP5MJ/subunit j, ATP5F1C/subunit gamma, ATP5F1D/subunit delta, ATP5F1E/subunit epsilon, ATP5PF/subunit F6, ATP5PB/subunit b, ATP5PD/subunit d, ATP5PO/subunit OSCP. ATP synthase complex consists of a soluble F(1) head domain (subunits alpha(3) and beta(3)) - the catalytic core - and a membrane F(0) domain - the membrane proton channel (subunits c, a, 8, e, f, g, k and j). These two domains are linked by a central stalk (subunits gamma, delta, and epsilon) rotating inside the F1 region and a stationary peripheral stalk (subunits F6, b, d, and OSCP). Post-translationally, acetylation at Lys-162 decreases ATP production. Deacetylated by SIRT3. In terms of processing, in response to mitochondrial stress, the precursor protein is ubiquitinated by the SIFI complex in the cytoplasm before mitochondrial import, leading to its degradation. Within the SIFI complex, UBR4 initiates ubiquitin chain that are further elongated or branched by KCMF1.

The protein localises to the mitochondrion. The protein resides in the mitochondrion inner membrane. In terms of biological role, subunit OSCP, of the mitochondrial membrane ATP synthase complex (F(1)F(0) ATP synthase or Complex V) that produces ATP from ADP in the presence of a proton gradient across the membrane which is generated by electron transport complexes of the respiratory chain. ATP synthase complex consist of a soluble F(1) head domain - the catalytic core - and a membrane F(1) domain - the membrane proton channel. These two domains are linked by a central stalk rotating inside the F(1) region and a stationary peripheral stalk. During catalysis, ATP synthesis in the catalytic domain of F(1) is coupled via a rotary mechanism of the central stalk subunits to proton translocation. In vivo, can only synthesize ATP although its ATP hydrolase activity can be activated artificially in vitro. Part of the complex F(0) domain. Part of the complex F(0) domain and the peripheric stalk, which acts as a stator to hold the catalytic alpha(3)beta(3) subcomplex and subunit a/ATP6 static relative to the rotary elements. This is ATP synthase peripheral stalk subunit OSCP, mitochondrial from Callithrix jacchus (White-tufted-ear marmoset).